Reading from the N-terminus, the 530-residue chain is 5-aminolevulinate synthase, mitochondrial (530 aa).

A mitochondrion-targeting transit peptide spans 1-26 (MFRPVLKVRPSFSYPYSIVSSRSVRL). Residues Arg73, Ser186, and Lys205 each contribute to the substrate site. Pyridoxal 5'-phosphate contacts are provided by Ser238, His266, and Thr316. The active site involves Lys319. An N6-(pyridoxal phosphate)lysine modification is found at Lys319. Positions 348 and 349 each coordinate pyridoxal 5'-phosphate. A substrate-binding site is contributed by Thr434.

The protein belongs to the class-II pyridoxal-phosphate-dependent aminotransferase family. Homodimer. The cofactor is pyridoxal 5'-phosphate.

Its subcellular location is the mitochondrion matrix. The enzyme catalyses succinyl-CoA + glycine + H(+) = 5-aminolevulinate + CO2 + CoA. The protein operates within porphyrin-containing compound metabolism; protoporphyrin-IX biosynthesis; 5-aminolevulinate from glycine: step 1/1. Its function is as follows. Catalyzes the synthesis of 5-aminolevulinate (ALA) from succinyl-CoA and glycine, the first and rate-limiting step in heme biosynthesis. The protein is 5-aminolevulinate synthase, mitochondrial (HEM1) of Candida glabrata (strain ATCC 2001 / BCRC 20586 / JCM 3761 / NBRC 0622 / NRRL Y-65 / CBS 138) (Yeast).